A 323-amino-acid chain; its full sequence is Serpentine receptor class gamma-5 (323 aa).

The next 7 membrane-spanning stretches (helical) occupy residues 31-51 (QLFYMVPGIIIHFRILSIMLF), 63-83 (FIIFSMDSIASLTQLILDLFI), 98-117 (YPLFEHYVLFPNIIFSIYNY), 151-171 (IPVTIAFITLSPFLVIWNVII), 193-213 (WASLSMFQMIFMAISLTITVF), 245-265 (AAFFSAALFQSYFAFFSITAA), and 272-292 (FLQGFAFDVLNVGSPIVMVLI).

This sequence belongs to the nematode receptor-like protein srg family.

The protein localises to the membrane. The protein is Serpentine receptor class gamma-5 (srg-5) of Caenorhabditis elegans.